The sequence spans 268 residues: NADH-quinone oxidoreductase subunit B 1 (268 aa).

[4Fe-4S] cluster is bound by residues C42, C43, C108, and C138.

Belongs to the complex I 20 kDa subunit family. In terms of assembly, NDH-1 is composed of 14 different subunits. Subunits NuoB, C, D, E, F, and G constitute the peripheral sector of the complex. [4Fe-4S] cluster serves as cofactor.

It localises to the cell membrane. The enzyme catalyses a quinone + NADH + 5 H(+)(in) = a quinol + NAD(+) + 4 H(+)(out). NDH-1 shuttles electrons from NADH, via FMN and iron-sulfur (Fe-S) centers, to quinones in the respiratory chain. The immediate electron acceptor for the enzyme in this species is believed to be ubiquinone. Couples the redox reaction to proton translocation (for every two electrons transferred, four hydrogen ions are translocated across the cytoplasmic membrane), and thus conserves the redox energy in a proton gradient. This is NADH-quinone oxidoreductase subunit B 1 from Roseiflexus sp. (strain RS-1).